A 322-amino-acid chain; its full sequence is MAEFPKVRMRRLRKANLRWMFREARLSPENLITPIFVDENIKEKKPIESMPDYFRIPLEMVDKEVEECLEKDLRSFILFGIPSYKDETGSSAYDQNGVIQKAVRRIKAEFPDAVIVTDVCLCEYTTHGHCGVVKDGEIVNDETLPIIGKTAVSHAESGADIVAPSGMMDGMVKAIREALDAAGFESTPIMSYSAKYASNFYSPFRDAAESGFKFGDRRGYQMDIHNAREAMREIELDVKEGADIIMVKPALPYLDIIRMVRERFDLPLAAYNVSGEYSMIKAAIKNGWLSEEAIYEVLISIKRAGADLIITYHSKEIAEKLQ.

3 residues coordinate Zn(2+): C120, C122, and C130. The Schiff-base intermediate with substrate role is filled by K195. The 5-aminolevulinate site is built by R205 and R217. E233 is a Mg(2+) binding site. Catalysis depends on K248, which acts as the Schiff-base intermediate with substrate. 5-aminolevulinate is bound by residues S274 and Y312.

It belongs to the ALAD family. Homooctamer. Zn(2+) is required as a cofactor.

The catalysed reaction is 2 5-aminolevulinate = porphobilinogen + 2 H2O + H(+). The protein operates within porphyrin-containing compound metabolism; protoporphyrin-IX biosynthesis; coproporphyrinogen-III from 5-aminolevulinate: step 1/4. Its function is as follows. Catalyzes an early step in the biosynthesis of tetrapyrroles. Binds two molecules of 5-aminolevulinate per subunit, each at a distinct site, and catalyzes their condensation to form porphobilinogen. This is Delta-aminolevulinic acid dehydratase (hemB) from Archaeoglobus fulgidus (strain ATCC 49558 / DSM 4304 / JCM 9628 / NBRC 100126 / VC-16).